A 146-amino-acid polypeptide reads, in one-letter code: NADH-quinone oxidoreductase subunit A (146 aa).

A run of 3 helical transmembrane segments spans residues 14-34 (FALFLIIAIGLCVFMLTGGFL), 68-88 (LVAMFFVIFDVEALYLYAWAV), and 96-116 (IGFIEATIFILVLLAGLIYLV).

The protein belongs to the complex I subunit 3 family. As to quaternary structure, NDH-1 is composed of 13 different subunits. Subunits NuoA, H, J, K, L, M, N constitute the membrane sector of the complex.

The protein resides in the cell inner membrane. The enzyme catalyses a quinone + NADH + 5 H(+)(in) = a quinol + NAD(+) + 4 H(+)(out). Its function is as follows. NDH-1 shuttles electrons from NADH, via FMN and iron-sulfur (Fe-S) centers, to quinones in the respiratory chain. The immediate electron acceptor for the enzyme in this species is believed to be ubiquinone. Couples the redox reaction to proton translocation (for every two electrons transferred, four hydrogen ions are translocated across the cytoplasmic membrane), and thus conserves the redox energy in a proton gradient. The protein is NADH-quinone oxidoreductase subunit A of Pectobacterium atrosepticum (strain SCRI 1043 / ATCC BAA-672) (Erwinia carotovora subsp. atroseptica).